A 520-amino-acid chain; its full sequence is Anthranilate synthase component 1 (520 aa).

L-tryptophan contacts are provided by residues Ser-40 and 291–293 (PYM). Chorismate is bound at residue 328–329 (GT). Glu-361 lines the Mg(2+) pocket. Residues Tyr-449, Arg-469, 483–485 (GAG), and Gly-485 each bind chorismate. Glu-498 provides a ligand contact to Mg(2+).

It belongs to the anthranilate synthase component I family. Heterotetramer consisting of two non-identical subunits: a beta subunit (TrpG) and a large lpha subunit (TrpE). It depends on Mg(2+) as a cofactor.

The enzyme catalyses chorismate + L-glutamine = anthranilate + pyruvate + L-glutamate + H(+). It participates in amino-acid biosynthesis; L-tryptophan biosynthesis; L-tryptophan from chorismate: step 1/5. With respect to regulation, cooperatively feedback inhibited by tryptophan. Part of a heterotetrameric complex that catalyzes the two-step biosynthesis of anthranilate, an intermediate in the biosynthesis of L-tryptophan. In the first step, the glutamine-binding beta subunit (TrpG) of anthranilate synthase (AS) provides the glutamine amidotransferase activity which generates ammonia as a substrate that, along with chorismate, is used in the second step, catalyzed by the large alpha subunit of AS (TrpE) to produce anthranilate. In the absence of TrpG, TrpE can synthesize anthranilate directly from chorismate and high concentrations of ammonia. This chain is Anthranilate synthase component 1 (trpE), found in Escherichia coli (strain K12).